Consider the following 201-residue polypeptide: Recombination protein RecR (201 aa).

The C4-type zinc finger occupies 60 to 75 (CKSCGNIDTRNPCTVC). Residues 83 to 178 (SIIVVVADVA…KVTRLAHGVP (96 aa)) enclose the Toprim domain.

It belongs to the RecR family.

Functionally, may play a role in DNA repair. It seems to be involved in an RecBC-independent recombinational process of DNA repair. It may act with RecF and RecO. This is Recombination protein RecR from Rhodopseudomonas palustris (strain BisB5).